Here is a 341-residue protein sequence, read N- to C-terminus: Bis(monoacylglycero)phosphate synthase CLN5 (341 aa).

Topologically, residues 1–13 (MLRGGPCGAHWRP) are cytoplasmic. Residues 14-30 (ALALALLGLATILGASP) traverse the membrane as a helical; Signal-anchor for type II membrane protein segment. Topologically, residues 31-341 (TSGQRWPVPY…PTRHTTFTDL (311 aa)) are lumenal. Cystine bridges form between Cys-53-Cys-142 and Cys-60-Cys-148. Residue His-100 is the Proton acceptor of the active site. N-linked (GlcNAc...) asparagine glycosylation is found at Asn-113, Asn-126, Asn-161, and Asn-186. The Nucleophile; Acyl-thioester intermediate role is filled by Cys-214. N-linked (GlcNAc...) asparagine glycosylation is found at Asn-238, Asn-254, and Asn-264. The membrane-anchoring stretch occupies residues 287–326 (FLMNFLKIFDTVIIHRQFYLFYNFEYWFLPMKPPFVKITY).

Belongs to the CLN5 family. In terms of assembly, multimer. Interacts with PPT1, TPP1, CLN3, CLN6, CLN8, ATP5F1A and ATP5F1B. Interacts with SORT1, RAB5A and RAB7A. In terms of processing, N-glycosylated with both high mannose and complex type sugars. Glycosylation is important for proper folding and trafficking to the lysosomes. Post-translationally, the type II membrane signal anchor is proteolytically cleaved to produce a mature form that is transported to the lysosomes (Bis(monoacylglycero)phosphate synthase CLN5, secreted form). Can undergo proteolytic cleavage at the C-terminus, probably by a cysteine protease and may involve the removal of approximately 10-15 residues from the C-terminal end. In terms of tissue distribution, heart, kidney, liver, spleen, muscle and rectum (at protein level).

The protein resides in the lysosome. It is found in the membrane. It catalyses the reaction S-hexadecanoyl-L-cysteinyl-[protein] + H2O = L-cysteinyl-[protein] + hexadecanoate + H(+). The catalysed reaction is 2 1-acyl-sn-glycero-3-phospho-(1'-sn-glycerol) = 1-acyl-sn-glycero-3-phospho-(3'-acyl-sn-1'-glycerol) + sn-glycero-3-phospho-(1'-sn-glycerol). It carries out the reaction 2 1-(9Z-octadecenoyl)-sn-glycero-3-phospho-(1'-sn-glycerol) = 1-(9Z-octadecenoyl)-sn-glycero-3-phospho-(3'-(9Z-octadecenoyl)-1'-sn-glycerol) + sn-glycero-3-phospho-(1'-sn-glycerol). The enzyme catalyses 2 1-octadecanoyl-sn-glycero-3-phospho-(1'-sn-glycerol) = 1-octadecanoyl-sn-glycero-3-phospho-(3'-octadecanoyl-1'-sn-glycerol) + sn-glycero-3-phospho-(1'-sn-glycerol). It catalyses the reaction 2 1-hexadecanoyl-sn-glycero-3-phospho-(1'-sn-glycerol) = 1-hexadecanoyl-sn-glycero-3-phospho-(3'-hexadecanoyl-1'-sn-glycerol) + sn-glycero-3-phospho-(1'-sn-glycerol). The catalysed reaction is 2 1-tetradecanoyl-sn-glycero-3-phospho-(1'-sn-glycerol) = 1-tetradecanoyl-sn-glycero-3-phospho-(3'-tetradecanoyl-1'-sn-glycerol) + sn-glycero-3-phospho-(1'-sn-glycerol). In terms of biological role, catalyzes the synthesis of bis(monoacylglycero)phosphate (BMP) via transacylation of 2 molecules of lysophosphatidylglycerol (LPG). BMP also known as lysobisphosphatidic acid plays a key role in the formation of intraluminal vesicles and in maintaining intracellular cholesterol homeostasis. Can use only LPG as the exclusive lysophospholipid acyl donor for base exchange and displays BMP synthase activity towards various LPGs (LPG 14:0, LPG 16:0, LPG 18:0, LPG 18:1) with a higher preference for longer chain lengths. Plays a role in influencing the retrograde trafficking of lysosomal sorting receptors SORT1 and IGF2R from the endosomes to the trans-Golgi network by controlling the recruitment of retromer complex to the endosomal membrane. Regulates the localization and activation of RAB7A which is required to recruit the retromer complex to the endosomal membrane. Functionally, exhibits palmitoyl protein thioesterase (S-depalmitoylation) activity in vitro and most likely plays a role in protein S-depalmitoylation. This Mus musculus (Mouse) protein is Bis(monoacylglycero)phosphate synthase CLN5 (Cln5).